The chain runs to 161 residues: Myosin regulatory light chain (161 aa).

Phosphoserine occurs at positions 13 and 14. EF-hand domains are found at residues 20–55 (EQVAELKEAFELFDKDRTGFIKKDALKTTCKQFGVF), 56–91 (VMEDQLDAMFAEADTTKSGAIGFPEFMSMMSRRMKQ), and 93–128 (SNEQILMNAFKTFDPEGNGYILTKDLSKALTTLGDK).

In terms of assembly, myosin is a hexamer of 2 heavy chains and 4 light chains (two regulatory light chains and two essential light chains).

This is Myosin regulatory light chain (mlcR) from Dictyostelium discoideum (Social amoeba).